A 307-amino-acid polypeptide reads, in one-letter code: Glycine--tRNA ligase alpha subunit (307 aa).

This sequence belongs to the class-II aminoacyl-tRNA synthetase family. As to quaternary structure, tetramer of two alpha and two beta subunits.

Its subcellular location is the cytoplasm. It carries out the reaction tRNA(Gly) + glycine + ATP = glycyl-tRNA(Gly) + AMP + diphosphate. In Aeromonas hydrophila subsp. hydrophila (strain ATCC 7966 / DSM 30187 / BCRC 13018 / CCUG 14551 / JCM 1027 / KCTC 2358 / NCIMB 9240 / NCTC 8049), this protein is Glycine--tRNA ligase alpha subunit.